Here is a 347-residue protein sequence, read N- to C-terminus: DNA-directed RNA polymerase subunit alpha (347 aa).

Residues 1–226 (MLISQRPTLS…ELFGLARELN (226 aa)) are alpha N-terminal domain (alpha-NTD). Positions 241–347 (ADHIASFALP…DQDYAETEQL (107 aa)) are alpha C-terminal domain (alpha-CTD).

The protein belongs to the RNA polymerase alpha chain family. As to quaternary structure, homodimer. The RNAP catalytic core consists of 2 alpha, 1 beta, 1 beta' and 1 omega subunit. When a sigma factor is associated with the core the holoenzyme is formed, which can initiate transcription.

The catalysed reaction is RNA(n) + a ribonucleoside 5'-triphosphate = RNA(n+1) + diphosphate. Functionally, DNA-dependent RNA polymerase catalyzes the transcription of DNA into RNA using the four ribonucleoside triphosphates as substrates. This is DNA-directed RNA polymerase subunit alpha from Mycobacterium ulcerans (strain Agy99).